A 695-amino-acid chain; its full sequence is MELQTMKITKDCVVEVSSEEEGFEGAWFRAVLEENPGNSSRRKLRVRYSTLLDMDGSSPLIEHIEQRFIRPVPPEENQQKDVVLEEGLLVDADHKDGWWTGVVVKKMEDDNYLVYFDLPPDIIQFERKQLRTHLIWTGGTWIQPEIEESNKSMFSPGTMVEVFSAKEAVWSPAMVVKETDVDDKKKFIVKDCNRYLSCNGDEARPTNIVNSRRVRPIPPPSSVDKYALLESVETFSGLGWHKGQVRKILSENRYTVRLEATQQESTIRHSDLRPFMVWEDGVWYNDLKQKPIKETPPTILKRKPMRSCSAAKSMTPTSATKHLRSFLNSKEISETPTKAKFVSATRELGKNKADAVMNDKTHLLITPQETSIAPVITVTPLKQQDAETEGKKSPKKTPEPVKHQNGLENSSTQHEMPEEENSNEKSRKRKREQNQNSNLNETDETCNVSKAGVNGTSDTIRVDDVDDQPLSSWINIPTVLSSDQSSNVVDNSAADVEETQAKGALTIEPFTKNLPFWKTYEMEKGYKTVPQNPHFSPLLEFKEDIREWSAVGMMVSFYGLLEEVKKLQLDVSSSKLGSLSTCFAELEKHGFDIATPQSRINKVLSLQVGRAKKVEERKCLEKRIEAEEIEMQKFEHEMVEVERKMLELKRRAEVAKEKKEAADKMIVEMKSSAETIDQEIANVELEFITSVLAPW.

The tract at residues 376 to 464 (ITVTPLKQQD…GTSDTIRVDD (89 aa)) is disordered. The segment covering 384 to 402 (QDAETEGKKSPKKTPEPVK) has biased composition (basic and acidic residues). Residues 434-459 (NQNSNLNETDETCNVSKAGVNGTSDT) show a composition bias toward polar residues. Residues 509–694 (PFTKNLPFWK…LEFITSVLAP (186 aa)) form the DUF724 domain. Residues 614-684 (VEERKCLEKR…TIDQEIANVE (71 aa)) are a coiled coil.

In terms of assembly, homodimer.

In terms of biological role, may be involved in the polar growth of plant cells via transportation of RNAs. In Arabidopsis thaliana (Mouse-ear cress), this protein is DUF724 domain-containing protein 3.